The sequence spans 342 residues: Renalase (342 aa).

The signal sequence occupies residues 1–17 (MSRVLVVGAGLTGSLCA). Residues T12, R42, and 61–62 (QY) each bind FAD.

The protein belongs to the renalase family. Requires FAD as cofactor. As to expression, expressed predominantly in kidney and testis with lower levels in liver, heart and embryo and weak expression in brain and skeletal muscle.

The protein resides in the secreted. The catalysed reaction is 1,2-dihydro-beta-NAD + O2 + H(+) = H2O2 + NAD(+). The enzyme catalyses 1,2-dihydro-beta-NADP + O2 + H(+) = H2O2 + NADP(+). It carries out the reaction 1,6-dihydro-beta-NADP + O2 + H(+) = H2O2 + NADP(+). It catalyses the reaction 1,6-dihydro-beta-NAD + O2 + H(+) = H2O2 + NAD(+). Its function is as follows. Catalyzes the oxidation of the less abundant 1,2-dihydro-beta-NAD(P) and 1,6-dihydro-beta-NAD(P) to form beta-NAD(P)(+). The enzyme hormone is secreted by the kidney, and circulates in blood and modulates cardiac function and systemic blood pressure. Lowers blood pressure in vivo by decreasing cardiac contractility and heart rate and preventing a compensatory increase in peripheral vascular tone, suggesting a causal link to the increased plasma catecholamine and heightened cardiovascular risk. High concentrations of catecholamines activate plasma renalase and promotes its secretion and synthesis. In Mus musculus (Mouse), this protein is Renalase.